Consider the following 226-residue polypeptide: Uridylate kinase (226 aa).

ATP is bound at residue 6–10 (KISGK). Residue glycine 43 participates in UMP binding. Positions 44 and 48 each coordinate ATP. Residues aspartate 65 and 113–119 (FQPGQST) contribute to the UMP site. Threonine 139, asparagine 140, tyrosine 145, and aspartate 148 together coordinate ATP.

This sequence belongs to the UMP kinase family. Homohexamer.

It localises to the cytoplasm. It carries out the reaction UMP + ATP = UDP + ADP. Its pathway is pyrimidine metabolism; CTP biosynthesis via de novo pathway; UDP from UMP (UMPK route): step 1/1. Its activity is regulated as follows. Inhibited by UTP. Its function is as follows. Catalyzes the reversible phosphorylation of UMP to UDP. The sequence is that of Uridylate kinase from Saccharolobus islandicus (strain M.16.27) (Sulfolobus islandicus).